Consider the following 386-residue polypeptide: ATP synthase subunit a (386 aa).

4 helical membrane-spanning segments follow: residues 150 to 170 (FTNE…LFFV), 243 to 263 (HFLI…IVGF), 270 to 290 (FFSF…LVLL), and 310 to 330 (MMAG…MLFL).

The protein belongs to the ATPase A chain family. F-type ATPases have 2 components, CF(1) - the catalytic core - and CF(0) - the membrane proton channel. CF(1) has five subunits: alpha(3), beta(3), gamma(1), delta(1), epsilon(1). CF(0) has three main subunits: a, b and c.

The protein localises to the mitochondrion inner membrane. Its function is as follows. Mitochondrial membrane ATP synthase (F(1)F(0) ATP synthase or Complex V) produces ATP from ADP in the presence of a proton gradient across the membrane which is generated by electron transport complexes of the respiratory chain. F-type ATPases consist of two structural domains, F(1) - containing the extramembraneous catalytic core and F(0) - containing the membrane proton channel, linked together by a central stalk and a peripheral stalk. During catalysis, ATP synthesis in the catalytic domain of F(1) is coupled via a rotary mechanism of the central stalk subunits to proton translocation. Key component of the proton channel; it may play a direct role in the translocation of protons across the membrane. This is ATP synthase subunit a (ATP6) from Triticum aestivum (Wheat).